We begin with the raw amino-acid sequence, 272 residues long: Ribosomal RNA small subunit methyltransferase A (272 aa).

Positions 18, 20, 45, 66, 91, and 113 each coordinate S-adenosyl-L-methionine.

The protein belongs to the class I-like SAM-binding methyltransferase superfamily. rRNA adenine N(6)-methyltransferase family. RsmA subfamily.

Its subcellular location is the cytoplasm. The enzyme catalyses adenosine(1518)/adenosine(1519) in 16S rRNA + 4 S-adenosyl-L-methionine = N(6)-dimethyladenosine(1518)/N(6)-dimethyladenosine(1519) in 16S rRNA + 4 S-adenosyl-L-homocysteine + 4 H(+). Specifically dimethylates two adjacent adenosines (A1518 and A1519) in the loop of a conserved hairpin near the 3'-end of 16S rRNA in the 30S particle. May play a critical role in biogenesis of 30S subunits. The chain is Ribosomal RNA small subunit methyltransferase A from Photorhabdus laumondii subsp. laumondii (strain DSM 15139 / CIP 105565 / TT01) (Photorhabdus luminescens subsp. laumondii).